Here is a 182-residue protein sequence, read N- to C-terminus: Probable RNA 2'-phosphotransferase (182 aa).

The protein belongs to the KptA/TPT1 family.

In terms of biological role, removes the 2'-phosphate from RNA via an intermediate in which the phosphate is ADP-ribosylated by NAD followed by a presumed transesterification to release the RNA and generate ADP-ribose 1''-2''-cyclic phosphate (APPR&gt;P). May function as an ADP-ribosylase. The protein is Probable RNA 2'-phosphotransferase of Trichormus variabilis (strain ATCC 29413 / PCC 7937) (Anabaena variabilis).